Here is a 457-residue protein sequence, read N- to C-terminus: uncharacterized protein (457 aa).

12 consecutive transmembrane segments (helical) span residues 18–38 (VMTV…PYLV), 44–64 (GAYV…MILV), 101–121 (MGLL…GWVI), 158–178 (IIFY…KGII), 188–208 (LMPL…TLPG), 228–248 (LFIF…GVLI), 273–293 (IIAV…GIEP), 294–314 (NAGP…LWAG), 316–336 (FFAI…SITI), 355–375 (AIVL…ILGD), 396–416 (SGNI…GFVL), and 433–453 (IKIW…VIFI).

Belongs to the sodium:neurotransmitter symporter (SNF) (TC 2.A.22) family.

The protein localises to the cell membrane. Putative sodium-dependent transporter. This is an uncharacterized protein from Haemophilus influenzae (strain ATCC 51907 / DSM 11121 / KW20 / Rd).